The sequence spans 523 residues: Pentatricopeptide repeat-containing protein At1g52640, mitochondrial (523 aa).

Residues 1–5 (MAIRT) constitute a mitochondrion transit peptide. PPR repeat units lie at residues 101–135 (SLES…NYFE), 137–171 (SSKV…GIKP), 172–206 (CVDD…GIVP), 207–241 (SAKT…NCVV), 242–276 (DLLA…GLKP), 277–311 (DAYS…DLVP), 312–346 (NVYT…GANP), 347–381 (DTWT…KCLP), 382–416 (DRHT…KFYP), and 417–452 (TVAT…GIPP). The segment at 498–523 (KRRRLGRRSENSEDDDDDFELERDTI) is disordered. The span at 509–523 (SEDDDDDFELERDTI) shows a compositional bias: acidic residues.

Belongs to the PPR family. P subfamily.

Its subcellular location is the mitochondrion. This chain is Pentatricopeptide repeat-containing protein At1g52640, mitochondrial, found in Arabidopsis thaliana (Mouse-ear cress).